Consider the following 195-residue polypeptide: Peptidyl-tRNA hydrolase (195 aa).

Tyrosine 18 contacts tRNA. Histidine 23 acts as the Proton acceptor in catalysis. 3 residues coordinate tRNA: phenylalanine 69, asparagine 71, and asparagine 117.

This sequence belongs to the PTH family. In terms of assembly, monomer.

The protein resides in the cytoplasm. The enzyme catalyses an N-acyl-L-alpha-aminoacyl-tRNA + H2O = an N-acyl-L-amino acid + a tRNA + H(+). Hydrolyzes ribosome-free peptidyl-tRNAs (with 1 or more amino acids incorporated), which drop off the ribosome during protein synthesis, or as a result of ribosome stalling. In terms of biological role, catalyzes the release of premature peptidyl moieties from peptidyl-tRNA molecules trapped in stalled 50S ribosomal subunits, and thus maintains levels of free tRNAs and 50S ribosomes. The sequence is that of Peptidyl-tRNA hydrolase from Alcanivorax borkumensis (strain ATCC 700651 / DSM 11573 / NCIMB 13689 / SK2).